We begin with the raw amino-acid sequence, 306 residues long: Probable cobalamin biosynthesis protein CobD (306 aa).

The next 5 helical transmembrane spans lie at 54–74, 88–108, 155–175, 207–227, and 286–306; these read LFGFLNVVLVLAIVFFMAFEI, ISLYSIILSFSIGHKSLIEFS, ITDSIIAPLIYAAIFGLPGAF, ILNFIPSRIAGMLLIISAPFY, and SLKAVDYSVLLFLIIYMILFM.

The protein belongs to the CobD/CbiB family.

Its subcellular location is the cell membrane. It functions in the pathway cofactor biosynthesis; adenosylcobalamin biosynthesis. Its function is as follows. Converts cobyric acid to cobinamide by the addition of aminopropanol on the F carboxylic group. This chain is Probable cobalamin biosynthesis protein CobD, found in Methanococcus maripaludis (strain DSM 14266 / JCM 13030 / NBRC 101832 / S2 / LL).